A 366-amino-acid polypeptide reads, in one-letter code: Anhydro-N-acetylmuramic acid kinase (366 aa).

10–17 (GTSMDGID) contacts ATP.

The protein belongs to the anhydro-N-acetylmuramic acid kinase family.

It carries out the reaction 1,6-anhydro-N-acetyl-beta-muramate + ATP + H2O = N-acetyl-D-muramate 6-phosphate + ADP + H(+). It functions in the pathway amino-sugar metabolism; 1,6-anhydro-N-acetylmuramate degradation. The protein operates within cell wall biogenesis; peptidoglycan recycling. In terms of biological role, catalyzes the specific phosphorylation of 1,6-anhydro-N-acetylmuramic acid (anhMurNAc) with the simultaneous cleavage of the 1,6-anhydro ring, generating MurNAc-6-P. Is required for the utilization of anhMurNAc either imported from the medium or derived from its own cell wall murein, and thus plays a role in cell wall recycling. The protein is Anhydro-N-acetylmuramic acid kinase of Legionella pneumophila (strain Corby).